The primary structure comprises 171 residues: MLFIICLVFISCNVLREVKYQETWCFPAYGMVIGLWLMLSSIPQRRLVLNHTRGMYHFSIQGRTVCQGPMHLVYVRLALSSDAYGGRFFQLVLCGHKLEPLVLVQLSERYEQMEFLGRHLARKLNINYFDYLASSYRHVVRHWPLGASFSPGIVQRKTQVYTKSSVNDLDV.

The Cytoplasmic segment spans residues Met1–Leu2. A helical membrane pass occupies residues Phe3–Glu17. Residues Val18–Ala28 are Extracellular-facing. A helical transmembrane segment spans residues Tyr29–Ser40. Over Ser41 to Val171 the chain is Cytoplasmic.

As to quaternary structure, component of the CatSper complex or CatSpermasome composed of the core pore-forming members CATSPER1, CATSPER2, CATSPER3 and CATSPER4 as well as auxiliary members CATSPERB, CATSPERG2, CATSPERD, CATSPERE, CATSPERZ, C2CD6/CATSPERT, SLCO6C1, TMEM249, TMEM262 and EFCAB9. HSPA1 may be an additional auxiliary complex member. The core complex members CATSPER1, CATSPER2, CATSPER3 and CATSPER4 form a heterotetrameric channel. The auxiliary CATSPERB, CATSPERG2, CATSPERD and CATSPERE subunits form a pavilion-like structure over the pore which stabilizes the complex through interactions with CATSPER4, CATSPER3, CATSPER1 and CATSPER2 respectively. SLCO6C1 interacts with CATSPERE and TMEM262/CATSPERH interacts with CATSPERB, further stabilizing the complex. C2CD6/CATSPERT interacts at least with CATSPERD and is required for targeting the CatSper complex in the flagellar membrane.

The protein localises to the cell projection. Its subcellular location is the cilium. It is found in the flagellum membrane. Auxiliary component of the CatSper complex, a complex involved in sperm cell hyperactivation. The chain is Cation channel sperm-associated auxiliary subunit TMEM249 from Mus musculus (Mouse).